A 206-amino-acid polypeptide reads, in one-letter code: MADSEADKPLRKISAAFKKLAIIVNSPNPEVPVTQFSHACSLVSPLFGCLGIAFKFAEMDYVAKVDDLVRASSSISTLVVMMDKDIEADCVRKAGSHTRNLLRVKRGLDMVKVLFEQIIASEGDNSLKDPATKSYAQVFAPHHGWAIRKAVSLGMYALPTRAHLLNMLKEDEAAAKIHMQSYVNSSAPLITYLDNLFLSKQLGIDW.

The an N-acylsphingoid base 1-phosphate site is built by Asp60, Lys64, Arg99, Arg103, and His143.

Belongs to the GLTP family. In terms of assembly, interacts with BPA1, PRA1F2 and PRA1F3.

It localises to the cytoplasm. Functionally, exhibits selective intermembrane transfer of ceramide-1-phosphate (C1P) and phytoceramide-1-phosphate. Does not transport ceramide (Cer) or GalCer, suggesting a requirement for phosphate in the headgroup for functionality. Transports in vitro sphingosine, but not glycosphingolipids. Also has some in vitro activity with sphingomyelin, a lipid not detected in plant tissues. The transport function may be not directly involved in regulating cell death. Rather, perturbations in the function of ACD11 or related components could be monitored by R-proteins, which then mediate defense and programmed cell death (PCD), as proposed in the guard hypothesis. C1P transfer is stimulated by phosphatidylserine in C1P source vesicles. Regulates autophagy, inflammasome mediated IL1B and IL18 processing, and pyroptosis, but not apoptosis. In Arabidopsis thaliana (Mouse-ear cress), this protein is Accelerated cell death 11.